Here is a 357-residue protein sequence, read N- to C-terminus: Membrane-bound lytic murein transglycosylase C (357 aa).

Positions 1–17 are cleaved as a signal peptide; sequence MKLKKFLVLLLIPFLYA. Cys18 is lipidated: N-palmitoyl cysteine. Cys18 is lipidated: S-diacylglycerol cysteine.

This sequence belongs to the transglycosylase Slt family.

It localises to the cell outer membrane. It carries out the reaction Exolytic cleavage of the (1-&gt;4)-beta-glycosidic linkage between N-acetylmuramic acid (MurNAc) and N-acetylglucosamine (GlcNAc) residues in peptidoglycan, from either the reducing or the non-reducing ends of the peptidoglycan chains, with concomitant formation of a 1,6-anhydrobond in the MurNAc residue.. Functionally, murein-degrading enzyme. May play a role in recycling of muropeptides during cell elongation and/or cell division. The protein is Membrane-bound lytic murein transglycosylase C of Mannheimia succiniciproducens (strain KCTC 0769BP / MBEL55E).